The primary structure comprises 509 residues: MEIRAAEISAILKQQIATFGTEAEVAEVGQVLSVGDGIARVHGLDKVQAGEMVEFPGGIKGMALNLETDNVGVVIFGDDRNIKEGDVVKRTGSIVDVPVGKGLLGRVVDALGNPIDGKGPIEAASRQRVDVKAPGIIPRKSVHEPMSTGIKAVDALIPIGRGQRELVIGDRQTGKTAILVDTIINQKRWHDANDEKAKLFCIYVAVGQKRSTVAQIVKTLTDYGAMDYTIVVAATASEPAPLQFIAPYAGCTMGEYFRDNGMHALIIYDDLSKQAVAYRQMSLLLRRPPGREAYPGDVFYLHSRLLERAAKMGDAAGAGSLTALPVIETQANDVSAYIPTNVISITDGQIFLETELFYKGIRPAVNVGLSVSRVGSAAQIKAMKQVAGSIKLELAQYREMAAFAQFASDLDPATQKLLARGARLTELLKQPQFSPMATEEEVISIYAGVKGYLDKIDVRQVGRFESSLLSEIKSKAPEILTAIATEKQISAQTEEKLKAFLDAFSKTFA.

169 to 176 is a binding site for ATP; it reads GDRQTGKT.

It belongs to the ATPase alpha/beta chains family. In terms of assembly, F-type ATPases have 2 components, CF(1) - the catalytic core - and CF(0) - the membrane proton channel. CF(1) has five subunits: alpha(3), beta(3), gamma(1), delta(1), epsilon(1). CF(0) has three main subunits: a(1), b(2) and c(9-12). The alpha and beta chains form an alternating ring which encloses part of the gamma chain. CF(1) is attached to CF(0) by a central stalk formed by the gamma and epsilon chains, while a peripheral stalk is formed by the delta and b chains.

The protein resides in the cell inner membrane. It catalyses the reaction ATP + H2O + 4 H(+)(in) = ADP + phosphate + 5 H(+)(out). Produces ATP from ADP in the presence of a proton gradient across the membrane. The alpha chain is a regulatory subunit. This is ATP synthase subunit alpha from Paramagnetospirillum magneticum (strain ATCC 700264 / AMB-1) (Magnetospirillum magneticum).